The chain runs to 236 residues: Orotidine 5'-phosphate decarboxylase (236 aa).

Residues Asp-17, Lys-39, 66-75 (DLKFHDIPNT), Thr-125, Arg-186, Gln-195, Gly-215, and Arg-216 contribute to the substrate site. Lys-68 (proton donor) is an active-site residue.

Belongs to the OMP decarboxylase family. Type 1 subfamily. As to quaternary structure, homodimer.

The enzyme catalyses orotidine 5'-phosphate + H(+) = UMP + CO2. Its pathway is pyrimidine metabolism; UMP biosynthesis via de novo pathway; UMP from orotate: step 2/2. Catalyzes the decarboxylation of orotidine 5'-monophosphate (OMP) to uridine 5'-monophosphate (UMP). The protein is Orotidine 5'-phosphate decarboxylase of Buchnera aphidicola subsp. Acyrthosiphon pisum (strain APS) (Acyrthosiphon pisum symbiotic bacterium).